Here is a 479-residue protein sequence, read N- to C-terminus: Odorant receptor coreceptor (479 aa).

Over methionine 1–phenylalanine 43 the chain is Cytoplasmic. The chain crosses the membrane as a helical span at residues cysteine 44–isoleucine 64. Over glutamate 65–threonine 73 the chain is Extracellular. A helical membrane pass occupies residues alanine 74–valine 94. Residues arginine 95–leucine 133 are Cytoplasmic-facing. A helical membrane pass occupies residues leucine 134–phenylalanine 154. Over glutamate 155–glycine 190 the chain is Extracellular. Asparagine 167 carries an N-linked (GlcNAc...) asparagine glycan. A helical transmembrane segment spans residues isoleucine 191–alanine 211. The Cytoplasmic portion of the chain corresponds to asparagine 212–aspartate 350. Positions serine 261–glycine 280 are disordered. The chain crosses the membrane as a helical span at residues alanine 351–alanine 371. The Extracellular segment spans residues tyrosine 372–tyrosine 383. Residues alanine 384–phenylalanine 404 form a helical membrane-spanning segment. Over glycine 405–threonine 455 the chain is Cytoplasmic. The chain crosses the membrane as a helical span at residues valine 456–valine 476. Over glutamine 477–lysine 479 the chain is Extracellular.

It belongs to the insect chemoreceptor superfamily. Heteromeric odorant receptor channel (TC 1.A.69) family. Orco subfamily. In terms of assembly, heterodimer with conventional odorant receptors (ORs).

Its subcellular location is the cell membrane. Odorant coreceptor which complexes with conventional odorant receptors (ORs) to form odorant-sensing units, providing sensitive and prolonged odorant signaling and calcium permeability. Obligate coreceptor of all odorant receptors. Orco is a universal and integral part of the functional odorant receptor, involved in the dendritic localization of other olfactory receptors. Can form functional ion channels in the absence of an odor-binding odorant receptor. Plays a central role in the perception of olfactory stimuli in ants and is essential for ant social organization. Required for pheromone sensing and mating behavior. Also required for the development and maintenance of odorant receptor neurons (ORNs) and of antennal lobe glomeruli. This is Odorant receptor coreceptor from Harpegnathos saltator (Jerdon's jumping ant).